The following is a 126-amino-acid chain: Fluoride-specific ion channel FluC (126 aa).

Transmembrane regions (helical) follow at residues 4–24 (FAIL…RYLV), 38–58 (YGTL…IAAF), 71–91 (IIGL…MDNV), and 104–124 (LNVV…FQLL). Gly-78 and Thr-81 together coordinate Na(+).

This sequence belongs to the fluoride channel Fluc/FEX (TC 1.A.43) family.

It is found in the cell inner membrane. The enzyme catalyses fluoride(in) = fluoride(out). With respect to regulation, na(+) is not transported, but it plays an essential structural role and its presence is essential for fluoride channel function. Fluoride-specific ion channel. Important for reducing fluoride concentration in the cell, thus reducing its toxicity. This chain is Fluoride-specific ion channel FluC, found in Vibrio vulnificus (strain CMCP6).